A 427-amino-acid chain; its full sequence is ETS domain-containing protein Elk-1 (427 aa).

Positions 5–86 (VTLWQFLLQL…SGQKFVYKFV (82 aa)) form a DNA-binding region, ETS. Disordered regions lie at residues 116–146 (ATVH…GLAR), 166–202 (LQPQ…SPNP), and 226–252 (PNQK…VEGP). Residues K229, K248, and K253 each participate in a glycyl lysine isopeptide (Lys-Gly) (interchain with G-Cter in SUMO) cross-link. Over residues 300 to 310 (STSTTEITQPQ) the composition is skewed to polar residues. A disordered region spans residues 300 to 350 (STSTTEITQPQKGRKPRDLELPLSPSLLGGQGPERTPGSGTSSGLQAQGPA). S323 is subject to Phosphoserine; by MAPK1. Residues T335, T352, T362, and T367 each carry the phosphothreonine; by MAPK1 modification. The segment at 348–398 (GPALTPSLLPTHTLTPVLLTPSSLPPSIHFWSTLSPIAPRSPAKLSFQFPS) is sufficient for interaction with MAD2L2. An O-linked (GlcNAc) threonine glycan is attached at T380. Residue S382 is modified to Phosphoserine; by MAPK1 and MAPK8. A Phosphoserine; by MAPK1 modification is found at S388. Phosphothreonine; by MAPK1 is present on T416. Phosphoserine; by MAPK1 is present on S421.

Belongs to the ETS family. Interacts in its sumoylated form with PIAS2/PIASX which enhances its transcriptional activator activity. Interacts with MAD2L2; the interaction is direct and promotes phosphorylation by the kinases MAPK8 and/or MAPK9. Interacts with POU1F1. Sumoylation represses transcriptional activator activity as it results in recruitment of HDAC2 to target gene promoters which leads to decreased histone acetylation and reduced transactivator activity. It also regulates nuclear retention. In terms of processing, on mitogenic stimulation, phosphorylated on C-terminal serine and threonine residues by MAPK1. Ser-382 and Ser-388 are the preferred sites for MAPK1. In vitro, phosphorylation by MAPK1 potentiates ternary complex formation with the serum responses factors, SRE and SRF. Also phosphorylated on Ser-382 by MAPK8 and/or MAKP9. Phosphorylation leads to loss of sumoylation and restores transcriptional activator activity. Phosphorylated and activated by CAMK4, MAPK11, MAPK12 and MAPK14. Upon bFGF stimulus, phosphorylated by PAK1. Phosphorylated by PRP4K at Thr-416; phosphorylation activation ELK1 transcriptional activity.

It is found in the nucleus. In terms of biological role, transcription factor that binds to purine-rich DNA sequences. Forms a ternary complex with SRF and the ETS and SRF motifs of the serum response element (SRE) on the promoter region of immediate early genes such as FOS and IER2. Induces target gene transcription upon JNK and MAPK-signaling pathways stimulation. The chain is ETS domain-containing protein Elk-1 from Rattus norvegicus (Rat).